The sequence spans 237 residues: Purine nucleoside phosphorylase DeoD-type (237 aa).

His4 is an a purine D-ribonucleoside binding site. Residues Gly20, Arg24, Arg43, and 87-90 (RVGT) contribute to the phosphate site. Residues 180–182 (EME) and 204–205 (SD) each bind a purine D-ribonucleoside. Catalysis depends on Asp205, which acts as the Proton donor.

It belongs to the PNP/UDP phosphorylase family. As to quaternary structure, homohexamer; trimer of homodimers.

The enzyme catalyses a purine D-ribonucleoside + phosphate = a purine nucleobase + alpha-D-ribose 1-phosphate. It carries out the reaction a purine 2'-deoxy-D-ribonucleoside + phosphate = a purine nucleobase + 2-deoxy-alpha-D-ribose 1-phosphate. In terms of biological role, catalyzes the reversible phosphorolytic breakdown of the N-glycosidic bond in the beta-(deoxy)ribonucleoside molecules, with the formation of the corresponding free purine bases and pentose-1-phosphate. In Streptococcus suis (strain 98HAH33), this protein is Purine nucleoside phosphorylase DeoD-type.